A 153-amino-acid polypeptide reads, in one-letter code: 6,7-dimethyl-8-ribityllumazine synthase (153 aa).

Residues Phe-22, 56–58 (AFE), and 80–82 (TVI) each bind 5-amino-6-(D-ribitylamino)uracil. 85–86 (ST) is a (2S)-2-hydroxy-3-oxobutyl phosphate binding site. His-88 functions as the Proton donor in the catalytic mechanism. Phe-113 lines the 5-amino-6-(D-ribitylamino)uracil pocket. Arg-127 lines the (2S)-2-hydroxy-3-oxobutyl phosphate pocket.

It belongs to the DMRL synthase family. In terms of assembly, forms an icosahedral capsid composed of 60 subunits, arranged as a dodecamer of pentamers.

It catalyses the reaction (2S)-2-hydroxy-3-oxobutyl phosphate + 5-amino-6-(D-ribitylamino)uracil = 6,7-dimethyl-8-(1-D-ribityl)lumazine + phosphate + 2 H2O + H(+). Its pathway is cofactor biosynthesis; riboflavin biosynthesis; riboflavin from 2-hydroxy-3-oxobutyl phosphate and 5-amino-6-(D-ribitylamino)uracil: step 1/2. Catalyzes the formation of 6,7-dimethyl-8-ribityllumazine by condensation of 5-amino-6-(D-ribitylamino)uracil with 3,4-dihydroxy-2-butanone 4-phosphate. This is the penultimate step in the biosynthesis of riboflavin. The chain is 6,7-dimethyl-8-ribityllumazine synthase from Haemophilus ducreyi (strain 35000HP / ATCC 700724).